The sequence spans 655 residues: Chaperone protein DnaK 3 (655 aa).

The residue at position 197 (threonine 197) is a Phosphothreonine; by autocatalysis.

It belongs to the heat shock protein 70 family.

Acts as a chaperone. The sequence is that of Chaperone protein DnaK 3 from Synechococcus sp. (strain ATCC 27144 / PCC 6301 / SAUG 1402/1) (Anacystis nidulans).